The following is a 525-amino-acid chain: Probable alpha-galactosidase A (525 aa).

The first 17 residues, 1-17 (MHPSMTLLAILPPLVRA), serve as a signal peptide directing secretion. Residues Cys-40 and Cys-72 are joined by a disulfide bond. N-linked (GlcNAc...) asparagine glycosylation is found at Asn-43, Asn-81, and Asn-117. A disulfide bridge links Cys-120 with Cys-150. Asp-148 serves as the catalytic Nucleophile. N-linked (GlcNAc...) asparagine glycosylation occurs at Asn-197. The active-site Proton donor is the Asp-206. A Ricin B-type lectin domain is found at 402–525 (PPDCPMVIPT…GLPSGVDIEA (124 aa)). Intrachain disulfides connect Cys-422/Cys-434 and Cys-459/Cys-472.

It belongs to the glycosyl hydrolase 27 family.

Its subcellular location is the secreted. The enzyme catalyses Hydrolysis of terminal, non-reducing alpha-D-galactose residues in alpha-D-galactosides, including galactose oligosaccharides, galactomannans and galactolipids.. Its function is as follows. Hydrolyzes a variety of simple alpha-D-galactoside as well as more complex molecules such as oligosaccharides and polysaccharides. In Aspergillus clavatus (strain ATCC 1007 / CBS 513.65 / DSM 816 / NCTC 3887 / NRRL 1 / QM 1276 / 107), this protein is Probable alpha-galactosidase A (aglA).